Reading from the N-terminus, the 325-residue chain is Proto-oncogene Mas (325 aa).

The Extracellular portion of the chain corresponds to 1-36 (MDGSNVTSFVVEEPTNISTGRNASVGNAHRQIPIVH). N-linked (GlcNAc...) asparagine glycosylation is found at Asn-5, Asn-16, and Asn-22. Residues 37 to 61 (WVIMSISPVGFVENGILLWFLCFRM) form a helical membrane-spanning segment. Residues 62 to 65 (RRNP) lie on the Cytoplasmic side of the membrane. The helical transmembrane segment at 66–86 (FTVYITHLSIADISLLFCIFI) threads the bilayer. The Extracellular segment spans residues 87–104 (LSIDYALDYELSSGHYYT). Residues 105-128 (IVTLSVTFLFGYNTGLYLLTAISV) form a helical membrane-spanning segment. Topologically, residues 129–149 (ERCLSVLYPIWYRCHRPKYQS) are cytoplasmic. Residues 150–172 (ALVCALLWALSCLVTTMEYVMCI) traverse the membrane as a helical segment. At 173–185 (DREEESHSRNDCR) the chain is on the extracellular side. A helical membrane pass occupies residues 186-206 (AVIIFIAILSFLVFTPLMLVS). Over 207 to 224 (STILVVKIRKNTWASHSS) the chain is Cytoplasmic. The helical transmembrane segment at 225 to 245 (KLYIVIMVTIIIFLIFAMPMR) threads the bilayer. The Extracellular portion of the chain corresponds to 246–263 (LLYLLYYEYWSTFGNLHH). The helical transmembrane segment at 264–284 (ISLLFSTINSSANPFIYFFVG) threads the bilayer. Residues 285–325 (SSKKKRFKESLKVVLTRAFKDEMQPRRQKDNCNTVTVETVV) are Cytoplasmic-facing.

This sequence belongs to the G-protein coupled receptor 1 family. Interacts with AGTR1. Interacts with FLNA (via filamin repeat 21); increases PKA-mediated phosphorylation of FLNA.

It localises to the cell membrane. Functionally, receptor for angiotensin 1-7. Acts specifically as a functional antagonist of AGTR1 (angiotensin-2 type 1 receptor), although it up-regulates AGTR1 receptor levels. Positive regulation of AGTR1 levels occurs through activation of the G-proteins GNA11 and GNAQ, and stimulation of the protein kinase C signaling cascade. The antagonist effect on AGTR1 function is probably due to AGTR1 being physically altered by MAS1. This is Proto-oncogene Mas (MAS1) from Homo sapiens (Human).